Consider the following 63-residue polypeptide: Large ribosomal subunit protein uL29 (63 aa).

The protein belongs to the universal ribosomal protein uL29 family.

This Edwardsiella ictaluri (strain 93-146) protein is Large ribosomal subunit protein uL29.